We begin with the raw amino-acid sequence, 229 residues long: MNKLNEALKKAEHIVFLTGAGVSVPSGIPDYRSKNGLYAGMSSPEYMLSHTCLVREPEKFYQFVTENMYYPDAEPNAIHTKMAEIEAEKDVTIITQNIDGLHEKAGSKKVVNFHGSLYHCYCQKCGMSVTAEEYLKSDIHSGCGGVIRPDVVLYEEAIPESAIDQSLAAIRQADLIVIVGTSFRVSPFCNLTDYRNKKARIFAVNKEQISLPYPFEMMESDAVKVFAEI.

One can recognise a Deacetylase sirtuin-type domain in the interval 1–229 (MNKLNEALKK…SDAVKVFAEI (229 aa)). The NAD(+) site is built by Ala20, Arg32, Gln96, Ile98, Asp99, His114, Thr181, Ser182, Asn205, and Val223. Ile98 and Asp99 together coordinate nicotinamide. The Proton acceptor role is filled by His114.

Belongs to the sirtuin family. Class U subfamily.

The protein localises to the cytoplasm. The enzyme catalyses N(6)-acetyl-L-lysyl-[protein] + NAD(+) + H2O = 2''-O-acetyl-ADP-D-ribose + nicotinamide + L-lysyl-[protein]. Functionally, NAD-dependent protein deacetylase which modulates the activities of several enzymes which are inactive in their acetylated form. This Listeria monocytogenes serotype 4b (strain F2365) protein is NAD-dependent protein deacetylase.